A 145-amino-acid polypeptide reads, in one-letter code: Transcription antitermination protein NusB (145 aa).

It belongs to the NusB family.

Involved in transcription antitermination. Required for transcription of ribosomal RNA (rRNA) genes. Binds specifically to the boxA antiterminator sequence of the ribosomal RNA (rrn) operons. The sequence is that of Transcription antitermination protein NusB from Ruminiclostridium cellulolyticum (strain ATCC 35319 / DSM 5812 / JCM 6584 / H10) (Clostridium cellulolyticum).